The chain runs to 94 residues: Viral macrophage inflammatory protein 2 (94 aa).

An N-terminal signal peptide occupies residues 1–20; the sequence is MDTKGILLVAVLTALLCLQS. 2 disulfides stabilise this stretch: Cys-34–Cys-58 and Cys-35–Cys-74.

The protein belongs to the intercrine beta (chemokine CC) family. Monomer. Interacts with human chemokine receptor CXCR4.

The protein resides in the secreted. Its function is as follows. Blocks infection by several different human immunodeficiency virus type 1 (HIV-1) strains. This occurs because vMIP-II binds to a wide range of chemokine receptors. May form part of the response to host defenses contributing to virus-induced neoplasia and may have relevance to KSHV and HIV-I interactions. This chain is Viral macrophage inflammatory protein 2 (ORF K4), found in Human herpesvirus 8 type P (isolate GK18) (HHV-8).